We begin with the raw amino-acid sequence, 185 residues long: Large ribosomal subunit protein uL5 (185 aa).

The protein belongs to the universal ribosomal protein uL5 family. In terms of assembly, part of the 50S ribosomal subunit; part of the 5S rRNA/L5/L18/L25 subcomplex. Contacts the 5S rRNA and the P site tRNA. Forms a bridge to the 30S subunit in the 70S ribosome.

Its function is as follows. This is one of the proteins that bind and probably mediate the attachment of the 5S RNA into the large ribosomal subunit, where it forms part of the central protuberance. In the 70S ribosome it contacts protein S13 of the 30S subunit (bridge B1b), connecting the 2 subunits; this bridge is implicated in subunit movement. Contacts the P site tRNA; the 5S rRNA and some of its associated proteins might help stabilize positioning of ribosome-bound tRNAs. The chain is Large ribosomal subunit protein uL5 from Rhizobium etli (strain CIAT 652).